A 33-amino-acid polypeptide reads, in one-letter code: Beta-amanitin proprotein (33 aa).

Positions 1–10 are excised as a propeptide; it reads MSDINATRLP. A cross-link (cyclopeptide (Ile-Pro)) is located at residues 11–18; it reads IWGIGCDP. Positions 12–16 form a cross-link, 2'-cysteinyl-6'-hydroxytryptophan sulfoxide (Trp-Cys); that stretch reads WGIGC. A propeptide spanning residues 19–33 is cleaved from the precursor; sequence CVGDEVTALLTRGEA.

Belongs to the MSDIN fungal toxin family. In terms of processing, processed by the macrocyclase-peptidase enzyme POPB to yield a toxic cyclic decapeptide. POPB first removes 10 residues from the N-terminus. Conformational trapping of the remaining peptide forces the enzyme to release this intermediate rather than proceed to macrocyclization. The enzyme rebinds the remaining peptide in a different conformation and catalyzes macrocyclization of the N-terminal 8 residues.

Functionally, toxin belonging to the bicyclic octapeptides amatoxins that acts by binding non-competitively to RNA polymerase II and greatly slowing the elongation of transcripts from target promoters. The sequence is that of Beta-amanitin proprotein from Amanita fuligineoides.